We begin with the raw amino-acid sequence, 250 residues long: DNA polymerase sliding clamp (250 aa).

It belongs to the PCNA family. In terms of assembly, homotrimer. The subunits circularize to form a toroid; DNA passes through its center. Replication factor C (RFC) is required to load the toroid on the DNA.

Its function is as follows. Sliding clamp subunit that acts as a moving platform for DNA processing. Responsible for tethering the catalytic subunit of DNA polymerase and other proteins to DNA during high-speed replication. The protein is DNA polymerase sliding clamp of Methanococcus maripaludis (strain DSM 14266 / JCM 13030 / NBRC 101832 / S2 / LL).